Here is a 661-residue protein sequence, read N- to C-terminus: UvrABC system protein B (661 aa).

Residues lysine 26–arginine 413 form the Helicase ATP-binding domain. Residue glycine 39–threonine 46 coordinates ATP. The Beta-hairpin motif lies at tyrosine 92–isoleucine 115. Residues glutamine 430–isoleucine 596 enclose the Helicase C-terminal domain. The region spanning glutamine 625–glutamate 660 is the UVR domain.

The protein belongs to the UvrB family. As to quaternary structure, forms a heterotetramer with UvrA during the search for lesions. Interacts with UvrC in an incision complex.

The protein resides in the cytoplasm. Its function is as follows. The UvrABC repair system catalyzes the recognition and processing of DNA lesions. A damage recognition complex composed of 2 UvrA and 2 UvrB subunits scans DNA for abnormalities. Upon binding of the UvrA(2)B(2) complex to a putative damaged site, the DNA wraps around one UvrB monomer. DNA wrap is dependent on ATP binding by UvrB and probably causes local melting of the DNA helix, facilitating insertion of UvrB beta-hairpin between the DNA strands. Then UvrB probes one DNA strand for the presence of a lesion. If a lesion is found the UvrA subunits dissociate and the UvrB-DNA preincision complex is formed. This complex is subsequently bound by UvrC and the second UvrB is released. If no lesion is found, the DNA wraps around the other UvrB subunit that will check the other stand for damage. The chain is UvrABC system protein B from Bacillus subtilis (strain 168).